Here is a 142-residue protein sequence, read N- to C-terminus: Large ribosomal subunit protein uL13 (142 aa).

This sequence belongs to the universal ribosomal protein uL13 family. In terms of assembly, part of the 50S ribosomal subunit.

In terms of biological role, this protein is one of the early assembly proteins of the 50S ribosomal subunit, although it is not seen to bind rRNA by itself. It is important during the early stages of 50S assembly. This chain is Large ribosomal subunit protein uL13, found in Pasteurella multocida (strain Pm70).